Reading from the N-terminus, the 365-residue chain is 3-dehydroquinate synthase (365 aa).

Residues 107-111 (GVIGD), 131-132 (TS), K144, and K153 each bind NAD(+). E186, H251, and H268 together coordinate Zn(2+).

It belongs to the sugar phosphate cyclases superfamily. Dehydroquinate synthase family. Co(2+) serves as cofactor. It depends on Zn(2+) as a cofactor. NAD(+) is required as a cofactor.

It localises to the cytoplasm. The catalysed reaction is 7-phospho-2-dehydro-3-deoxy-D-arabino-heptonate = 3-dehydroquinate + phosphate. It participates in metabolic intermediate biosynthesis; chorismate biosynthesis; chorismate from D-erythrose 4-phosphate and phosphoenolpyruvate: step 2/7. In terms of biological role, catalyzes the conversion of 3-deoxy-D-arabino-heptulosonate 7-phosphate (DAHP) to dehydroquinate (DHQ). This Crocosphaera subtropica (strain ATCC 51142 / BH68) (Cyanothece sp. (strain ATCC 51142)) protein is 3-dehydroquinate synthase.